A 562-amino-acid chain; its full sequence is Teichoic acid ribitol-phosphate polymerase TarL (562 aa).

This sequence belongs to the CDP-glycerol glycerophosphotransferase family.

Its subcellular location is the cell membrane. It carries out the reaction 4-O-[di(2R)-glycerylphospho]-N-acetyl-beta-D-mannosaminyl-(1-&gt;4)-N-acetyl-alpha-D-glucosaminyl di-trans,octa-cis-undecaprenyl diphosphate + n CDP-L-ribitol = 4-O-[(D-ribitylphospho)(n)-di{(2R)-glycerylphospho}]-N-acetyl-beta-D-mannosaminyl-(1-&gt;4)-N-acetyl-alpha-D-glucosaminyl di-trans,octa-cis-undecaprenyl diphosphate + n CMP + n H(+). It participates in cell wall biogenesis; poly(ribitol phosphate) teichoic acid biosynthesis. Responsible for the polymerization of the main chain of the major teichoic acid by sequential transfer of ribitol phosphate units from CDP-ribitol to the second glycerol phosphate attached to the disaccharide linkage unit. Synthesizes polymers of more than 40 ribitol phosphate units in length. This chain is Teichoic acid ribitol-phosphate polymerase TarL (tarL), found in Staphylococcus aureus (strain NCTC 8325 / PS 47).